Reading from the N-terminus, the 568-residue chain is MSEIDTNDIKKEMDNKNYRDPTDNKELLKWTKKKRKRSNDSMHINNFYRYNPPNFKLLASKYPTFDKYIINKTEKIYNIDWKDSNATKELTRVLLDHDFGLRIELPDNYLCPTLTLRINYLYWISDQLKNLKIILNDNDNDNKIIKGIDIGTGTSCIFPLLGAKLFNNWSFIGIDIDDKVLEYAQNNITINSLNSKITLFKNEKNSDILLKLLNYKEGSNTFNSSNDDHQDNHDDDDDDEEYFADFCLCNPPFFKDLNENNNNKNNNPKSNCTGSVNEMVTDGGEFEFVKRIIKESFQLKCKIRFYTTMIGRKVNLNPLINILIKQYYLPKNQIQTTELVQGNTSRWVLSWYFLNKSTNLETKENNNINNNNNNNNNNNINNNNQFLTRMERRKLYREGITLNLDSDDNNNNNNNNNNNNNNNNNNNNNNNNNNNKIVEIIKLILDNNDIIYKTDENNIKYECKYLLNNVIVGSSIKLDRDIEFLFTIFIDLTTRLILFKPIDPKINNNNNNNNNNNNNNNNNNNNNNNNNNNNNKNNNNSCDGEIINSNLFFILKFLENIKNEIKLK.

Positions 1–20 (MSEIDTNDIKKEMDNKNYRD) are disordered. The span at 7–20 (NDIKKEMDNKNYRD) shows a compositional bias: basic and acidic residues. Residues Arg117, Gly151, Asp175, and Asn250 each coordinate S-adenosyl-L-methionine. 3 disordered regions span residues 363–383 (KENN…INNN), 403–431 (NLDS…NNNN), and 503–538 (DPKI…NKNN). Composition is skewed to low complexity over residues 365–383 (NNNI…INNN), 409–431 (NNNN…NNNN), and 507–538 (NNNN…NKNN).

Belongs to the methyltransferase superfamily. METTL16/RlmF family.

It carries out the reaction adenosine in U6 snRNA + S-adenosyl-L-methionine = N(6)-methyladenosine in U6 snRNA + S-adenosyl-L-homocysteine + H(+). In terms of biological role, RNA N6-methyltransferase that mediates N6-methylation of adenine of U6 small nuclear RNA (U6 snRNA). This chain is U6 small nuclear RNA (adenine-(43)-N(6))-methyltransferase, found in Dictyostelium discoideum (Social amoeba).